A 244-amino-acid chain; its full sequence is tRNA (guanine-N(7)-)-methyltransferase (244 aa).

S-adenosyl-L-methionine contacts are provided by glutamate 75, glutamate 100, aspartate 127, and aspartate 150. Aspartate 150 is an active-site residue. Substrate-binding positions include lysine 154, aspartate 186, and 223–226 (TRFE).

It belongs to the class I-like SAM-binding methyltransferase superfamily. TrmB family.

The catalysed reaction is guanosine(46) in tRNA + S-adenosyl-L-methionine = N(7)-methylguanosine(46) in tRNA + S-adenosyl-L-homocysteine. Its pathway is tRNA modification; N(7)-methylguanine-tRNA biosynthesis. Catalyzes the formation of N(7)-methylguanine at position 46 (m7G46) in tRNA. This Xylella fastidiosa (strain 9a5c) protein is tRNA (guanine-N(7)-)-methyltransferase.